The sequence spans 345 residues: MSVADLKNNIHKLDTGYGLMSLTWRAEPIPQSQAFEAMHRVVELSRERGHKAFFNVGEFYGPDFINLSYVHDFFAKYPDLRKDVVISCKGGADNATLTPRGSHDDVVQSVKNSVSAIGGYIDIFEVARIDTSLCTKGEVYPYESFEALAEMISEGVIGGISLSEVNEEQIRAIHKDWGKFLTCVEVELSLFSNDILHNGIAKTCAELGLSIICYSPLGRGLLTGQLKSNADIPEGDFRKSLKRFSDESLKKNLTLVRFLQEEIVDKRPQNNSITLAQLALGWVKHWNKVPEYSGAKFIPIPSGSSISKVNENFDEQKTKLTDQEFNAINKYLTTFHTVGDRYEMA.

Tyrosine 60 functions as the Proton donor in the catalytic mechanism.

This sequence belongs to the aldo/keto reductase family.

The protein resides in the cytoplasm. It localises to the nucleus. The enzyme catalyses pyridoxine + NADP(+) = pyridoxal + NADPH + H(+). Its pathway is cofactor degradation; B6 vitamer degradation; pyridoxal from pyridoxine (dehydrogenase route): step 1/1. Catalyzes the reduction of pyridoxal (PL) with NADPH and oxidation of pyridoxine (PN) with NADP(+). The sequence is that of Putative pyridoxal reductase from Saccharomyces cerevisiae (strain ATCC 204508 / S288c) (Baker's yeast).